We begin with the raw amino-acid sequence, 218 residues long: Adenylate kinase (218 aa).

Residue glycine 10–threonine 15 coordinates ATP. The interval serine 30–valine 59 is NMP. AMP is bound by residues threonine 31, arginine 36, glutamine 57 to valine 59, glycine 85 to arginine 88, and glutamine 92. Positions glycine 122–aspartate 159 are LID. ATP is bound by residues arginine 123 and threonine 132–tyrosine 133. AMP contacts are provided by arginine 156 and arginine 167. ATP is bound at residue glycine 203.

This sequence belongs to the adenylate kinase family. Monomer.

The protein localises to the cytoplasm. The catalysed reaction is AMP + ATP = 2 ADP. The protein operates within purine metabolism; AMP biosynthesis via salvage pathway; AMP from ADP: step 1/1. In terms of biological role, catalyzes the reversible transfer of the terminal phosphate group between ATP and AMP. Plays an important role in cellular energy homeostasis and in adenine nucleotide metabolism. The chain is Adenylate kinase from Marinomonas sp. (strain MWYL1).